A 208-amino-acid polypeptide reads, in one-letter code: Small ribosomal subunit protein uS4 (208 aa).

The S4 RNA-binding domain occupies arginine 98–methionine 161.

The protein belongs to the universal ribosomal protein uS4 family. Part of the 30S ribosomal subunit. Contacts protein S5. The interaction surface between S4 and S5 is involved in control of translational fidelity.

One of the primary rRNA binding proteins, it binds directly to 16S rRNA where it nucleates assembly of the body of the 30S subunit. In terms of biological role, with S5 and S12 plays an important role in translational accuracy. This Helicobacter acinonychis (strain Sheeba) protein is Small ribosomal subunit protein uS4.